Reading from the N-terminus, the 204-residue chain is Demethylsterigmatocystin 6-O-methyltransferase stcP (204 aa).

S-adenosyl-L-methionine-binding positions include 48–49, aspartate 73, 93–94, and arginine 109; these read GG and DF. Histidine 113 (proton acceptor) is an active-site residue.

It belongs to the class I-like SAM-binding methyltransferase superfamily. Cation-independent O-methyltransferase family.

It carries out the reaction 6-demethylsterigmatocystin + S-adenosyl-L-methionine = sterigmatocystin + S-adenosyl-L-homocysteine + H(+). It participates in mycotoxin biosynthesis; sterigmatocystin biosynthesis. Its function is as follows. Norsolorinic acid reductase; part of the gene cluster that mediates the biosynthesis of sterigmatocystin (ST), a polyketide-derived furanocoumarin which is part of the most toxic and carcinogenic compounds among the known mycotoxins. The first step in the biosynthesis of sterigmatocystin is the production of hexanoate by the fatty acid synthase (FAS) units stcJ and stcK. The polyketide backbone is assembled by the non-reducing polyketide synthase stcA by condensation of the starter hexanoyl-CoA and 7 malonyl-CoA extender units followed by cyclization and release of norsolorinic acid. Norsolorinic acid is the first stable intermediate in the biosynthesis of sterigmatocystin and is converted into averantin (AVN) by the ketoreductase stcE which reduces the hexanoate ketone to an alcohol. Averantin is then oxidized into 5'-hydroxyaverantin (HAVN) by the cytochrome P450 monooxygenase stcF. 5'-hydroxyaverantin is further converted to 5'-oxyaverantin (OAVN) by the 5'-hydroxyaverantin dehydrogenase stcG. The next step is the conversion of OAVN into averufin (AVF) which is catalyzed by a yet to be identified enzyme. The cytochrome P450 monooxygenase stcB and the flavin-binding monooxygenase stcW are both required for the conversion of averufin to 1-hydroxyversicolorone. The esterase stcI probably catalyzes the formation of versiconal hemiacetal acetate from 1-hydroxyversicolorone. The oxydoreductase stcN then probably catalyzes the biosynthetic step from versiconal to versicolorin B (VERB). The next step is performed by the versicolorin B desaturase stcL to produce versicolorin A (VERA). The ketoreductase stcU and the cytochrome P450 monooxygenase stcS are involved in the conversion of versicolorin A to demethylsterigmatocystin. The Baeyer-Villiger oxidas stcQ and the reductase stcR might be involved in the biosynthetic step from versicolorin A to demethylsterigmatocystin. The final step in the biosynthesis of sterigmatocystin is the methylation of demethylsterigmatocystin catalyzed by the methyltransferase stcP. The sequence is that of Demethylsterigmatocystin 6-O-methyltransferase stcP from Emericella nidulans (strain FGSC A4 / ATCC 38163 / CBS 112.46 / NRRL 194 / M139) (Aspergillus nidulans).